The sequence spans 166 residues: NAD(P)H-quinone oxidoreductase subunit I, chloroplastic (166 aa).

4Fe-4S ferredoxin-type domains follow at residues 55-84 and 95-124; these read GRIH…VDWK and LNYS…MTEE. [4Fe-4S] cluster is bound by residues Cys64, Cys67, Cys70, Cys74, Cys104, Cys107, Cys110, and Cys114.

This sequence belongs to the complex I 23 kDa subunit family. NDH is composed of at least 16 different subunits, 5 of which are encoded in the nucleus. It depends on [4Fe-4S] cluster as a cofactor.

It is found in the plastid. Its subcellular location is the chloroplast thylakoid membrane. The catalysed reaction is a plastoquinone + NADH + (n+1) H(+)(in) = a plastoquinol + NAD(+) + n H(+)(out). It catalyses the reaction a plastoquinone + NADPH + (n+1) H(+)(in) = a plastoquinol + NADP(+) + n H(+)(out). NDH shuttles electrons from NAD(P)H:plastoquinone, via FMN and iron-sulfur (Fe-S) centers, to quinones in the photosynthetic chain and possibly in a chloroplast respiratory chain. The immediate electron acceptor for the enzyme in this species is believed to be plastoquinone. Couples the redox reaction to proton translocation, and thus conserves the redox energy in a proton gradient. This chain is NAD(P)H-quinone oxidoreductase subunit I, chloroplastic, found in Chaenactis santolinoides (Santolina pincushion).